Consider the following 142-residue polypeptide: Hemoglobin subunit alpha (142 aa).

Residues 2–142 (VLSPADKTNV…VSTVLTSKYR (141 aa)) enclose the Globin domain. Position 4 is a phosphoserine (serine 4). N6-succinyllysine is present on lysine 8. Threonine 9 bears the Phosphothreonine mark. An N6-succinyllysine modification is found at lysine 12. Position 17 is an N6-acetyllysine; alternate (lysine 17). Lysine 17 carries the N6-succinyllysine; alternate modification. Tyrosine 25 bears the Phosphotyrosine mark. Position 36 is a phosphoserine (serine 36). Position 41 is an N6-succinyllysine (lysine 41). Residue serine 50 is modified to Phosphoserine. Residue histidine 59 participates in O2 binding. Histidine 88 contacts heme b. Serine 103 is modified (phosphoserine). Threonine 109 carries the post-translational modification Phosphothreonine. Phosphoserine is present on serine 125. A phosphothreonine mark is found at threonine 135 and threonine 138. Serine 139 carries the phosphoserine modification.

Belongs to the globin family. Heterotetramer of two alpha chains and two beta chains. Red blood cells.

In terms of biological role, involved in oxygen transport from the lung to the various peripheral tissues. Its function is as follows. Hemopressin acts as an antagonist peptide of the cannabinoid receptor CNR1. Hemopressin-binding efficiently blocks cannabinoid receptor CNR1 and subsequent signaling. This chain is Hemoglobin subunit alpha (HBA), found in Ailurus fulgens (Himalayan red panda).